A 269-amino-acid polypeptide reads, in one-letter code: 5'-nucleotidase SurE (269 aa).

Residues Asp-11, Asp-12, Ser-43, and Asn-101 each contribute to the a divalent metal cation site.

It belongs to the SurE nucleotidase family. The cofactor is a divalent metal cation.

Its subcellular location is the cytoplasm. It catalyses the reaction a ribonucleoside 5'-phosphate + H2O = a ribonucleoside + phosphate. Its function is as follows. Nucleotidase that shows phosphatase activity on nucleoside 5'-monophosphates. The sequence is that of 5'-nucleotidase SurE from Synechococcus sp. (strain CC9902).